We begin with the raw amino-acid sequence, 685 residues long: Dammaradiene synthase (685 aa).

PFTB repeat units lie at residues 82 to 123 (MDKM…RLLN) and 265 to 308 (IREA…DPVV). Asp-400 acts as the Proton donor in catalysis. 2 PFTB repeats span residues 424-465 (ITRC…KAMV) and 621-672 (IGHG…ARYR).

The protein belongs to the terpene cyclase/mutase family.

It catalyses the reaction squalene = dammara-20,24-diene. In terms of biological role, squalene cyclase producing the tetracyclic triterpene dammaradiene. This chain is Dammaradiene synthase (DCD), found in Dryopteris crassirhizoma (Thick stemmed wood fern).